Consider the following 440-residue polypeptide: uncharacterized protein (440 aa).

Disordered stretches follow at residues 49–81 and 162–295; these read CPPAQSHGHSSLRTNLNSSPPRCPQNPGTEPSL and LPKP…CASE. Over residues 55–80 the composition is skewed to polar residues; sequence HGHSSLRTNLNSSPPRCPQNPGTEPS. Positions 249–266 are enriched in basic and acidic residues; sequence YREELSNTKSRFSEDKGS. The span at 274-284 shows a compositional bias: low complexity; it reads SSNSSEPGLPG.

This sequence belongs to the tymoviridae protein p69 family.

This is an uncharacterized protein from Erysimum latent virus (ELV).